The following is a 61-amino-acid chain: MPRKGIIERWKRPKKFKVREYTRCSVCGRPKAVYREFGLCRVCFRKMALEGKLPGVKKASW.

4 residues coordinate Zn(2+): C24, C27, C40, and C43.

Belongs to the universal ribosomal protein uS14 family. Zinc-binding uS14 subfamily. Part of the 30S ribosomal subunit. Contacts proteins S3 and S10. Requires Zn(2+) as cofactor.

In terms of biological role, binds 16S rRNA, required for the assembly of 30S particles and may also be responsible for determining the conformation of the 16S rRNA at the A site. In Pseudothermotoga lettingae (strain ATCC BAA-301 / DSM 14385 / NBRC 107922 / TMO) (Thermotoga lettingae), this protein is Small ribosomal subunit protein uS14.